Reading from the N-terminus, the 389-residue chain is Phosphopentomutase (389 aa).

Mn(2+)-binding residues include Asp-12, Asp-284, His-289, Asp-325, His-326, and His-337.

Belongs to the phosphopentomutase family. It depends on Mn(2+) as a cofactor.

It is found in the cytoplasm. It carries out the reaction 2-deoxy-alpha-D-ribose 1-phosphate = 2-deoxy-D-ribose 5-phosphate. The enzyme catalyses alpha-D-ribose 1-phosphate = D-ribose 5-phosphate. The protein operates within carbohydrate degradation; 2-deoxy-D-ribose 1-phosphate degradation; D-glyceraldehyde 3-phosphate and acetaldehyde from 2-deoxy-alpha-D-ribose 1-phosphate: step 1/2. In terms of biological role, isomerase that catalyzes the conversion of deoxy-ribose 1-phosphate (dRib-1-P) and ribose 1-phosphate (Rib-1-P) to deoxy-ribose 5-phosphate (dRib-5-P) and ribose 5-phosphate (Rib-5-P), respectively. The sequence is that of Phosphopentomutase from Anaeromyxobacter sp. (strain Fw109-5).